A 341-amino-acid chain; its full sequence is Aromatic amino acid aminotransferase (341 aa).

N6-(pyridoxal phosphate)lysine is present on lysine 213.

The protein belongs to the class-II pyridoxal-phosphate-dependent aminotransferase family. Homodimer. Requires pyridoxal 5'-phosphate as cofactor.

It carries out the reaction an aromatic L-alpha-amino acid + 2-oxoglutarate = an aromatic oxo-acid + L-glutamate. In terms of biological role, aminotransferase that catalyzes the conversion of aromatic amino acids and 2-oxoglutarate into corresponding aromatic oxo acids and L-glutamate. May catalyze the transamination reaction in phenylalanine biosynthesis. This is Aromatic amino acid aminotransferase from Corynebacterium glutamicum (strain ATCC 13032 / DSM 20300 / JCM 1318 / BCRC 11384 / CCUG 27702 / LMG 3730 / NBRC 12168 / NCIMB 10025 / NRRL B-2784 / 534).